The primary structure comprises 111 residues: uncharacterized protein (111 aa).

3 helical membrane-spanning segments follow: residues 4 to 22 (FWIL…QFFI), 49 to 71 (LLIL…LFFI), and 91 to 108 (YMYH…LIYV).

The protein localises to the cell membrane. This is an uncharacterized protein from Bacillus subtilis (strain 168).